A 289-amino-acid chain; its full sequence is Pyridoxal kinase PdxY (289 aa).

Substrate contacts are provided by residues S9 and 44-45 (TQ). The ATP site is built by D112, V144, E149, and K182. D221 is a binding site for substrate.

It belongs to the pyridoxine kinase family. PdxY subfamily. Homodimer. Requires Mg(2+) as cofactor.

It catalyses the reaction pyridoxal + ATP = pyridoxal 5'-phosphate + ADP + H(+). Its pathway is cofactor metabolism; pyridoxal 5'-phosphate salvage; pyridoxal 5'-phosphate from pyridoxal: step 1/1. Its function is as follows. Pyridoxal kinase involved in the salvage pathway of pyridoxal 5'-phosphate (PLP). Catalyzes the phosphorylation of pyridoxal to PLP. In Vibrio campbellii (strain ATCC BAA-1116), this protein is Pyridoxal kinase PdxY.